A 390-amino-acid chain; its full sequence is Elongation factor Ts, mitochondrial (390 aa).

It belongs to the EF-Ts family.

The protein localises to the mitochondrion. Its function is as follows. Associates with the EF-Tu.GDP complex and induces the exchange of GDP to GTP. It remains bound to the aminoacyl-tRNA.EF-Tu.GTP complex up to the GTP hydrolysis stage on the ribosome. This is Elongation factor Ts, mitochondrial from Plasmodium falciparum (isolate 3D7).